The chain runs to 88 residues: Small ribosomal subunit protein uS15 (88 aa).

This sequence belongs to the universal ribosomal protein uS15 family. As to quaternary structure, part of the 30S ribosomal subunit. Forms a bridge to the 50S subunit in the 70S ribosome, contacting the 23S rRNA.

Functionally, one of the primary rRNA binding proteins, it binds directly to 16S rRNA where it helps nucleate assembly of the platform of the 30S subunit by binding and bridging several RNA helices of the 16S rRNA. In terms of biological role, forms an intersubunit bridge (bridge B4) with the 23S rRNA of the 50S subunit in the ribosome. This chain is Small ribosomal subunit protein uS15, found in Geotalea uraniireducens (strain Rf4) (Geobacter uraniireducens).